We begin with the raw amino-acid sequence, 344 residues long: GTPase Obg (344 aa).

An Obg domain is found at 1 to 159 (MKFLDLAKVY…RTIWLRLKLI (159 aa)). In terms of domain architecture, OBG-type G spans 160-326 (ADVGLLGLPN…VLRVLRARVD (167 aa)). GTP-binding positions include 166 to 173 (GLPNAGKS), 191 to 195 (FTTLV), 212 to 215 (DIPG), 279 to 282 (NKID), and 307 to 309 (SGV). Residues serine 173 and threonine 193 each coordinate Mg(2+).

Belongs to the TRAFAC class OBG-HflX-like GTPase superfamily. OBG GTPase family. In terms of assembly, monomer. Mg(2+) serves as cofactor.

The protein resides in the cytoplasm. In terms of biological role, an essential GTPase which binds GTP, GDP and possibly (p)ppGpp with moderate affinity, with high nucleotide exchange rates and a fairly low GTP hydrolysis rate. Plays a role in control of the cell cycle, stress response, ribosome biogenesis and in those bacteria that undergo differentiation, in morphogenesis control. The chain is GTPase Obg from Jannaschia sp. (strain CCS1).